Here is a 1235-residue protein sequence, read N- to C-terminus: MRLNIPTKPEDALWTDDQWKAIQANGNNILVAAAAGSGKTAVLVTRIIEKLINETENLNVDELLIVTFTNVSAAEMKYRIGKSLEEALVQNPESVHLKKQVALLNYASISTLHSFCLEIIRKHYFEADIDPNFRLIEPIESSMIRDEVLEDLLEKEYSIENNEGFFHLVESFTGDRSDAELHTLISKLYDFSRANPNPDLWLEQMVSFYDTQAITSITELPYFPIIKEDIQLRINQAKSYLLTAIDYANENNGPAPYLSTLENDLAQINTLSSISWDNWQDVKFGFESIDFKRIPALKNKADFDEEYVEEAKKFRDAAKKEVKNVLIDWFSREEENYLSDLEKMKPDIKTLSELVKKFAENFFEEKQQRGVLDFNDLEHLALKILLKNGAPSDVANSYKKQFKEVLIDEYQDTNMVQETILLLVTNSNDTKGNLFMVGDVKQSIYRFRLAEPTLFMAKYQEYQQDGEGSGIRIDLSQNFRSRKEVLDATNFIFHQLMDKHIAEIDYDEAAELTLGASFPEANNMATELLLIDMKSEEKESEDELSPQELQKNQVESRAIATKIREMIDNKFPIYDKKLQQNRPIQYRDIVILARAMTSAPDMEEAMKIKDIPFYANNNSGYFETTEVATMIALMKVIDNPYQDISLAAVLRSPIIGLNEEELGQIRMAKKKGYFFDAMLAYKDITVSDAANKISRFITQLNNWRELSIRENLTALIWQIYQETNFYEFVGGLPGGKQRQANLRALYDRANQYEKTSFRGLFRFVRFVERLEVRGDDLGTAKTLGEKEDVVRMMTIHASKGLEFPVVIVSGLSRKFNMRDIYSKTLLDKDYGFASNYRDIEKMIVYPTIMQQAIKQKKYREMIAEEMRVLYVALTRAEEKLILTATVPDFEKTSKNWLQVSNQQETILPAAIRAKAKCYLDWIGNATIRHSHFKELLCEEKIKTLPTDMKLQVEIKTKEMFLTDDLEKEKSDNWMENVKAHKQVPVKSPYKDEIERFMHYQYKDEEATGIRAKQSVTELKRQFSLQDSWSDTSILKEFQKVSLDRPKFLQQNKLSATEIGTAMHTLMQAVPLDDKPTEKDLVSLLQLMREKDILTEAQIKAINVNQIIAFFESALGKTVLQKKDKVKREVPFSYLLPAAKLYNQTNLDEHVLIQGVVDSMIEEEDSIILIDYKTDKIEGRYDNWEAAEKVMKERYQIQIKLYAEAIQAISRKKVSHAYLYFFDGQHICQINIEEGI.

One can recognise a UvrD-like helicase ATP-binding domain in the interval 12–482; that stretch reads ALWTDDQWKA…IDLSQNFRSR (471 aa). Residue 33-40 coordinates ATP; that stretch reads AAAGSGKT. The 292-residue stretch at 509–800 folds into the UvrD-like helicase C-terminal domain; the sequence is AAELTLGASF…RMMTIHASKG (292 aa).

The protein belongs to the helicase family. AddA subfamily. Heterodimer of AddA and AddB/RexB. Mg(2+) serves as cofactor.

The enzyme catalyses Couples ATP hydrolysis with the unwinding of duplex DNA by translocating in the 3'-5' direction.. The catalysed reaction is ATP + H2O = ADP + phosphate + H(+). In terms of biological role, the heterodimer acts as both an ATP-dependent DNA helicase and an ATP-dependent, dual-direction single-stranded exonuclease. Recognizes the chi site generating a DNA molecule suitable for the initiation of homologous recombination. The AddA nuclease domain is required for chi fragment generation; this subunit has the helicase and 3' -&gt; 5' nuclease activities. The chain is ATP-dependent helicase/nuclease subunit A from Listeria innocua serovar 6a (strain ATCC BAA-680 / CLIP 11262).